A 106-amino-acid polypeptide reads, in one-letter code: Acidic phospholipase A2 PhTX-III (106 aa).

Ca(2+) contacts are provided by Tyr-23, Gly-25, and Gly-27. 5 disulfides stabilise this stretch: Cys-24/Cys-40, Cys-39/Cys-75, Cys-45/Cys-106, Cys-46/Cys-68, and Cys-55/Cys-66. The active site involves His-43. Asp-44 serves as a coordination point for Ca(2+). Asp-69 is a catalytic residue.

Ca(2+) is required as a cofactor. Expressed by the venom gland.

The protein resides in the secreted. The enzyme catalyses a 1,2-diacyl-sn-glycero-3-phosphocholine + H2O = a 1-acyl-sn-glycero-3-phosphocholine + a fatty acid + H(+). Partially inhibited by magnesium ions and completely inhibited by zinc ions These divalent cations may act as competitive antagonists of the cofactor. Its function is as follows. Snake venom phospholipase A2 (PLA2) that induces inflammatory response, with local edema and release of cytokines IL-1 alpha, IL-6 and TNF-alpha. Does not exhibit myotoxic, anticoagulant and antibacterial effects. Release of pro-inflammatory cytokines may be due to mast cell degranulation, and edema may be induced by arachidonic acid that results from the PLA2 catalytic activity. PLA2 catalyzes the calcium-dependent hydrolysis of the 2-acyl groups in 3-sn-phosphoglycerides. This chain is Acidic phospholipase A2 PhTX-III, found in Bothrocophias hyoprora (Amazonian hognose viper).